The following is a 957-amino-acid chain: Valine--tRNA ligase (957 aa).

A 'HIGH' region motif is present at residues 45 to 55; sequence PNVTGSLHMGH. The 'KMSKS' region signature appears at 571 to 575; the sequence is KMSKS. Lys-574 provides a ligand contact to ATP. Residues 887-946 adopt a coiled-coil conformation; it reads VVDFAAEQARLEKELGKAEADIKRAEAKLANEKFVANAAEEVVEEEREKREAAVARKVKI.

The protein belongs to the class-I aminoacyl-tRNA synthetase family. ValS type 1 subfamily. Monomer.

The protein resides in the cytoplasm. It catalyses the reaction tRNA(Val) + L-valine + ATP = L-valyl-tRNA(Val) + AMP + diphosphate. Its function is as follows. Catalyzes the attachment of valine to tRNA(Val). As ValRS can inadvertently accommodate and process structurally similar amino acids such as threonine, to avoid such errors, it has a 'posttransfer' editing activity that hydrolyzes mischarged Thr-tRNA(Val) in a tRNA-dependent manner. This chain is Valine--tRNA ligase, found in Rhodopseudomonas palustris (strain ATCC BAA-98 / CGA009).